A 323-amino-acid chain; its full sequence is Tyrosine recombinase XerD (323 aa).

One can recognise a Core-binding (CB) domain in the interval Ala-21–Leu-106. Positions Ser-127–Ala-317 constitute a Tyr recombinase domain. Active-site residues include Arg-167, Lys-191, His-269, Arg-272, and His-295. The active-site O-(3'-phospho-DNA)-tyrosine intermediate is the Tyr-304.

It belongs to the 'phage' integrase family. XerD subfamily. In terms of assembly, forms a cyclic heterotetrameric complex composed of two molecules of XerC and two molecules of XerD.

It is found in the cytoplasm. Its function is as follows. Site-specific tyrosine recombinase, which acts by catalyzing the cutting and rejoining of the recombining DNA molecules. The XerC-XerD complex is essential to convert dimers of the bacterial chromosome into monomers to permit their segregation at cell division. It also contributes to the segregational stability of plasmids. This Xanthomonas campestris pv. campestris (strain ATCC 33913 / DSM 3586 / NCPPB 528 / LMG 568 / P 25) protein is Tyrosine recombinase XerD.